Consider the following 1139-residue polypeptide: GRIP and coiled-coil domain-containing protein (1139 aa).

Positions 366-388 (NDDSQINNNVSNKVNSPDDDPNT) are disordered. Over residues 369-380 (SQINNNVSNKVN) the composition is skewed to polar residues. Coiled-coil stretches lie at residues 472–648 (VTKL…INNE) and 758–877 (LYIL…ETQQ). Residues 1004–1024 (NEQENDNNNNNNNNNNNNNVE) form a disordered region. Low complexity predominate over residues 1009-1022 (DNNNNNNNNNNNNN). A coiled-coil region spans residues 1043–1084 (YKKIRKKLETYEILLNEQQEGKKKMTEEINSLKNQVKNYESI). The GRIP domain maps to 1084-1135 (INGNYQHIIYQKNILSNFIAQIPSRIQVDDYVSVIFNSFNFSNQEIEAINIK).

The polypeptide is GRIP and coiled-coil domain-containing protein (Plasmodium falciparum (isolate 3D7)).